We begin with the raw amino-acid sequence, 628 residues long: MVAFSALSGVSAVSLLLSLVQNAHGISLKVSTQGGNSSSPILYGFMFEDINHSGDGGIYGQMLQNPGLQGTAPNLTAWAAVGDATIAIDGDSPLTSAIPSTIKLNIADDATGAVGLTNEGYWGIPVDGSEFHSSFWIKGDYSGDITVRLVGNYTGTEYGSTTITHTSTADNFTQASVKFPTTKAPDGNVLYELTVDGSVAAGSSLNFGYLTLFGETYKSRENGLKPQLANVLDDMKGSFLRFPGGNNLEGNSAENRWKWNETIGDLCDRPGREGTWTYYNTDGLGLHEYFYWCEDLGLVPVLGVWDGFALESGGNTPLTGDALTPYIDDVLNELEYILGDTSTTYGAWRAANGQEEPWNLTMVEIGNEDMLGGGCESYAERFTAFYDAIHAAYPDLILIASTSEADCLPESMPEGSWVDYHDYSTPDGLVGQFNYFDNLNRSVPYFIGEYSRWEIDWPNMKGSVAEAVFMIGFERNSDVVKMAAYAPLLQLINSTQWTPDLIGYTQSPGDIFLSTSYYVQEMFSRNRGDTIKEVTSDSDFGPLYWVASSAGDSYYVKLANYGSETQDLTVSIPGTSTGKLTVLADSDPDAYNSDTQTLVTPSESTVQASNGTFTFSLPAWAVAVLAAN.

Residues 1–25 (MVAFSALSGVSAVSLLLSLVQNAHG) form the signal peptide. 10 N-linked (GlcNAc...) asparagine glycosylation sites follow: asparagine 36, asparagine 51, asparagine 74, asparagine 152, asparagine 171, asparagine 260, asparagine 359, asparagine 440, asparagine 493, and asparagine 610.

The protein belongs to the glycosyl hydrolase 51 family.

It carries out the reaction Hydrolysis of terminal non-reducing alpha-L-arabinofuranoside residues in alpha-L-arabinosides.. It participates in glycan metabolism; L-arabinan degradation. Acts only on small linear 1,5-alpha-linked L-arabinofuranosyl oligosaccharides. The chain is Alpha-L-arabinofuranosidase A (abfA) from Aspergillus niger.